Reading from the N-terminus, the 320-residue chain is D-amino-acid oxidase (320 aa).

Alanine 13, glycine 14, valine 15, threonine 42, threonine 43, serine 44, glycine 48, and alanine 49 together coordinate FAD. Residues tyrosine 220 and arginine 274 each coordinate D-proline. 2 residues coordinate D-serine: tyrosine 220 and arginine 274. The FAD site is built by arginine 274, glycine 299, glycine 300, glycine 302, and threonine 304. Glycine 300 is a binding site for D-proline. A D-serine-binding site is contributed by glycine 300.

Belongs to the DAMOX/DASOX family. It depends on FAD as a cofactor.

It is found in the cytoplasm. It localises to the secreted. The protein localises to the cell wall. It carries out the reaction a D-alpha-amino acid + O2 + H2O = a 2-oxocarboxylate + H2O2 + NH4(+). In terms of biological role, catalyzes the oxidative deamination of D-amino acids with broad substrate specificity. Enables the organism to utilize D-amino acids as a source of nutrients. Enables the organism to utilize glycine as a carbon source. The sequence is that of D-amino-acid oxidase from Mycobacterium tuberculosis (strain ATCC 25177 / H37Ra).